The primary structure comprises 355 residues: uncharacterized protein (355 aa).

This sequence belongs to the carbohydrate kinase PfkB family.

This is an uncharacterized protein from Dictyostelium discoideum (Social amoeba).